Consider the following 443-residue polypeptide: Glutamate-1-semialdehyde 2,1-aminomutase (443 aa).

Over residues 1 to 16 (MSVNADSQHSNNSSHQ) the composition is skewed to low complexity. The tract at residues 1–22 (MSVNADSQHSNNSSHQASEKAF) is disordered. Lys-277 bears the N6-(pyridoxal phosphate)lysine mark.

Belongs to the class-III pyridoxal-phosphate-dependent aminotransferase family. HemL subfamily. Homodimer. The cofactor is pyridoxal 5'-phosphate.

The protein resides in the cytoplasm. The enzyme catalyses (S)-4-amino-5-oxopentanoate = 5-aminolevulinate. The protein operates within porphyrin-containing compound metabolism; protoporphyrin-IX biosynthesis; 5-aminolevulinate from L-glutamyl-tRNA(Glu): step 2/2. This chain is Glutamate-1-semialdehyde 2,1-aminomutase, found in Corynebacterium jeikeium (strain K411).